The following is a 397-amino-acid chain: Acetate kinase (397 aa).

N8 lines the Mg(2+) pocket. Residue K15 coordinates ATP. R89 lines the substrate pocket. Residue D146 is the Proton donor/acceptor of the active site. Residues 206–210, 281–283, and 329–333 each bind ATP; these read HLGNG, DLR, and GIGEN. E382 contacts Mg(2+).

The protein belongs to the acetokinase family. In terms of assembly, homodimer. The cofactor is Mg(2+). Mn(2+) is required as a cofactor.

It localises to the cytoplasm. It carries out the reaction acetate + ATP = acetyl phosphate + ADP. Its pathway is metabolic intermediate biosynthesis; acetyl-CoA biosynthesis; acetyl-CoA from acetate: step 1/2. In terms of biological role, catalyzes the formation of acetyl phosphate from acetate and ATP. Can also catalyze the reverse reaction. The polypeptide is Acetate kinase (Bacillus cytotoxicus (strain DSM 22905 / CIP 110041 / 391-98 / NVH 391-98)).